A 235-amino-acid polypeptide reads, in one-letter code: Transcriptional regulatory protein MalR (235 aa).

Positions 3 to 119 (NVLIVEDDPM…RFQTALSDYR (117 aa)) constitute a Response regulatory domain. At D54 the chain carries 4-aspartylphosphate. The segment at residues 178-197 (TEDLAKHTEISQVSIRKYLK) is a DNA-binding region (H-T-H motif).

In terms of processing, phosphorylated and activated by MalK.

The protein resides in the cytoplasm. Functionally, member of a two-component regulatory system MalK/MalR. Activates transcription of maeA, maeN and yflS in presence of malate by binding to their promoter region. The sequence is that of Transcriptional regulatory protein MalR (malR) from Bacillus subtilis (strain 168).